Consider the following 320-residue polypeptide: Small ribosomal subunit protein mS35 (320 aa).

Residues 24–63 are disordered; that stretch reads SVASPAAPRAGPRTASRSERPMRRKALPPRTEKMDTDQDW.

This sequence belongs to the mitochondrion-specific ribosomal protein mS35 family. As to quaternary structure, component of the mitochondrial ribosome small subunit (28S) which comprises a 12S rRNA and about 30 distinct proteins.

The protein resides in the mitochondrion. This is Small ribosomal subunit protein mS35 from Mus musculus (Mouse).